We begin with the raw amino-acid sequence, 629 residues long: uncharacterized protein (629 aa).

Methionine 1 carries the N-acetylmethionine modification. A disordered region spans residues 308-395; it reads VDPEPEPDPP…PGRRSRARNA (88 aa). The segment covering 322–334 has biased composition (polar residues); that stretch reads SANEPASQPNSRS. Residues 451–587 enclose the VWFA domain; it reads LVIFVVDASG…VAEGAAAVVV (137 aa).

It belongs to the Mg-chelatase subunits D/I family.

This is an uncharacterized protein from Mycobacterium tuberculosis (strain ATCC 25618 / H37Rv).